Reading from the N-terminus, the 369-residue chain is RING-H2 finger protein ATL47 (369 aa).

The helical transmembrane segment at 52–72 (IILFIIVLLSVIFFICSILHL) threads the bilayer. An RING-type; atypical zinc finger spans residues 144–186 (CAVCLCEFSEDDKLRLLPNCSHAFHIDCIDTWLLSNSTCPLCR). Residues 332-355 (NNHPSETNLVVGGSSSSSSYVCSG) are disordered. The segment covering 341 to 355 (VVGGSSSSSSYVCSG) has biased composition (low complexity).

It belongs to the RING-type zinc finger family. ATL subfamily.

Its subcellular location is the membrane. The enzyme catalyses S-ubiquitinyl-[E2 ubiquitin-conjugating enzyme]-L-cysteine + [acceptor protein]-L-lysine = [E2 ubiquitin-conjugating enzyme]-L-cysteine + N(6)-ubiquitinyl-[acceptor protein]-L-lysine.. It functions in the pathway protein modification; protein ubiquitination. The polypeptide is RING-H2 finger protein ATL47 (ATL47) (Arabidopsis thaliana (Mouse-ear cress)).